Consider the following 33-residue polypeptide: GVLGTVKNLLIGAGKSAAQSVLKTLSCKLSNDC.

In terms of tissue distribution, expressed by the skin glands.

The protein localises to the secreted. In terms of biological role, antimicrobial peptide active against the Gram-positive bacterium S.aureus (MIC=25 uM) and against the Gram-negative bacteria E.coli (MIC=6 uM). Has no antifungal activity against C.albicans. Shows hemolytic activity against human erythrocytes only at high concentrations (LC(50)=180 uM). In Odorrana grahami (Yunnanfu frog), this protein is Brevinin-2GRb.